The chain runs to 532 residues: Glucose-6-phosphate isomerase (532 aa).

Catalysis depends on glutamate 330, which acts as the Proton donor. Catalysis depends on residues histidine 359 and lysine 461.

The protein belongs to the GPI family.

The protein resides in the cytoplasm. The catalysed reaction is alpha-D-glucose 6-phosphate = beta-D-fructose 6-phosphate. Its pathway is carbohydrate biosynthesis; gluconeogenesis. The protein operates within carbohydrate degradation; glycolysis; D-glyceraldehyde 3-phosphate and glycerone phosphate from D-glucose: step 2/4. Functionally, catalyzes the reversible isomerization of glucose-6-phosphate to fructose-6-phosphate. The chain is Glucose-6-phosphate isomerase from Synechococcus sp. (strain CC9902).